A 128-amino-acid polypeptide reads, in one-letter code: Fluoride-specific ion channel FluC (128 aa).

The next 4 helical transmembrane spans lie at 8 to 28 (IIFISSGAALGALSRWGLGLL), 38 to 58 (LGTLVANYLGCLIIGVFLAFF), 71 to 91 (FFVTGFLGSLTTFSTFSAEVI), and 103 to 123 (LMLASGHLLGCLLFTALGVFI). Positions 78 and 81 each coordinate Na(+).

This sequence belongs to the fluoride channel Fluc/FEX (TC 1.A.43) family.

The protein localises to the cell inner membrane. The catalysed reaction is fluoride(in) = fluoride(out). With respect to regulation, na(+) is not transported, but it plays an essential structural role and its presence is essential for fluoride channel function. In terms of biological role, fluoride-specific ion channel. Important for reducing fluoride concentration in the cell, thus reducing its toxicity. This is Fluoride-specific ion channel FluC from Pasteurella multocida (strain Pm70).